The chain runs to 152 residues: Ribosome maturation factor RimP (152 aa).

Belongs to the RimP family.

The protein localises to the cytoplasm. Required for maturation of 30S ribosomal subunits. This is Ribosome maturation factor RimP from Sodalis glossinidius (strain morsitans).